We begin with the raw amino-acid sequence, 252 residues long: Acyltransferase PGAP2 (252 aa).

The Cytoplasmic portion of the chain corresponds to 1 to 22; it reads MVPVGPERGANSLFSLRFTTFA. A helical membrane pass occupies residues 23 to 43; sequence VGTVSLPLFAFLFCIVWSLLF. The Lumenal segment spans residues 44–77; the sequence is NFSETTATHCHVPNYLPSVSAAIGGETPQRYIWR. Residues 78–98 traverse the membrane as a helical segment; the sequence is LCIGLHSAPRFLVGVAYLHYY. Over 99–111 the chain is Cytoplasmic; it reads QGTPCSSPAYPRL. A helical transmembrane segment spans residues 112–132; that stretch reads CHLNFLLNCCEIFFLILLTYV. Topologically, residues 133–142 are lumenal; that stretch reads SSSENYEVHK. The chain crosses the membrane as a helical span at residues 143–163; that stretch reads LGFMAFMLFSVGYMFVTCSLW. Topologically, residues 164–184 are cytoplasmic; the sequence is RVARKGSGSLEERTSYAWKKR. A helical transmembrane segment spans residues 185 to 205; that stretch reads LFGFYLLMFLSSILVYIWHNM. At 206–208 the chain is on the lumenal side; the sequence is YCE. A helical membrane pass occupies residues 209–229; that stretch reads AGVYTVFALLEYLVVLSNMGF. Over 230–252 the chain is Cytoplasmic; sequence HMTAWWDFGNKELMICSPGDKRI.

This sequence belongs to the PGAP2 family.

The protein resides in the golgi apparatus membrane. In terms of biological role, involved in the fatty acid remodeling steps of GPI-anchor maturation where the unsaturated acyl chain at sn-2 of inositol phosphate is replaced by a saturated stearoyl chain. May catalyze the second step of the fatty acid remodeling, by reacylating a lyso-GPI intermediate at sn-2 of inositol phosphate by a saturated chain. The fatty acid remodeling steps is critical for the integration of GPI-APs into lipid rafts. This chain is Acyltransferase PGAP2, found in Xenopus tropicalis (Western clawed frog).